Reading from the N-terminus, the 743-residue chain is Isocitrate dehydrogenase [NADP] 2 (743 aa).

N87 and S89 together coordinate NADP(+). S134, N137, R141, R147, and K257 together coordinate D-threo-isocitrate. N137 is a binding site for NADP(+). Residue D352 coordinates Mg(2+). Residues Y422 and R549 each contribute to the D-threo-isocitrate site. Residues D550 and D554 each contribute to the Mg(2+) site. NADP(+) is bound by residues S587, H591, R602, D604, and R651.

It belongs to the monomeric-type IDH family. As to quaternary structure, monomer. Mg(2+) is required as a cofactor. It depends on Mn(2+) as a cofactor.

It catalyses the reaction D-threo-isocitrate + NADP(+) = 2-oxoglutarate + CO2 + NADPH. Functionally, catalyzes the oxidative decarboxylation of isocitrate to 2-oxoglutarate and carbon dioxide with the concomitant reduction of NADP(+). In Colwellia maris, this protein is Isocitrate dehydrogenase [NADP] 2 (icd2).